The following is a 331-amino-acid chain: Pantothenate kinase (331 aa).

109–116 provides a ligand contact to ATP; that stretch reads GSVAVGKS.

Belongs to the prokaryotic pantothenate kinase family.

The protein resides in the cytoplasm. It carries out the reaction (R)-pantothenate + ATP = (R)-4'-phosphopantothenate + ADP + H(+). The protein operates within cofactor biosynthesis; coenzyme A biosynthesis; CoA from (R)-pantothenate: step 1/5. In Sinorhizobium medicae (strain WSM419) (Ensifer medicae), this protein is Pantothenate kinase.